The following is a 163-amino-acid chain: Nuclear cap-binding protein subunit 2 (163 aa).

MRNA is bound by residues Tyr-18, Tyr-41, 110–114 (RVDWD), 121–125 (RQYGR), and 131–132 (QV). Residues 38–116 (STLYVGNLSF…RIVRVDWDAG (79 aa)) form the RRM domain.

Belongs to the RRM NCBP2 family. As to quaternary structure, component of the nuclear cap-binding complex (CBC), a heterodimer composed of Cbp80 and Cbp20 that interacts with m7GpppG-capped RNA.

It is found in the nucleus. Its function is as follows. Component of the cap-binding complex (CBC), which binds co-transcriptionally to the 5' cap of pre-mRNAs and is involved in various processes such as pre-mRNA splicing and RNA-mediated gene silencing (RNAi). The CBC complex is involved in miRNA-mediated RNA interference and is required for primary microRNAs (miRNAs) processing. Also involved in innate immunity via the short interfering RNAs (siRNAs) processing machinery by restricting the viral RNA production. In the CBC complex, Cbp20 recognizes and binds capped RNAs (m7GpppG-capped RNA) but requires Cbp80 to stabilize the movement of its N-terminal loop and lock the CBC into a high affinity cap-binding state with the cap structure. This Anopheles gambiae (African malaria mosquito) protein is Nuclear cap-binding protein subunit 2 (Cbp20).